A 327-amino-acid chain; its full sequence is Annexin A8 (327 aa).

Annexin repeat units follow at residues 21 to 92 (FNPD…ALMY), 93 to 164 (PPYR…CLLQ), 177 to 249 (GLAL…TVVK), and 253 to 324 (NVHS…NLVG). The Ca(2+) site is built by M266, G268, G270, and D310.

Belongs to the annexin family.

This protein is an anticoagulant protein that acts as an indirect inhibitor of the thromboplastin-specific complex, which is involved in the blood coagulation cascade. The protein is Annexin A8 (Anxa8) of Rattus norvegicus (Rat).